An 869-amino-acid chain; its full sequence is MGNREMEELIPLVNRLQDAFSALGQSCLLELPQIAVVGGQSAGKSSVLENFVGRDFLPRGSGIVTRRPLVLQLVTSKAEYAEFLHCKGKKFTDFDEVRLEIEAETDRVTGMNKGISSIPINLRVYSPHVLNLTLIDLPGITKVPVGDQPPDIEYQIREMIMQFITRENCLILAVTPANTDLANSDALKLAKEVDPQGLRTIGVITKLDLMDEGTDARDVLENKLLPLRRGYVGVVNRSQKDIDGKKDIKAAMLAERKFFLSHPAYRHIADRMGTPHLQKVLNQQLTNHIRDTLPNFRNKLQGQLLSIEHEVEAYKNFKPEDPTRKTKALLQMVQQFAVDFEKRIEGSGDQVDTLELSGGAKINRIFHERFPFEIVKMEFNEKELRREISYAIKNIHGIRTGLFTPDMAFEAIVKKQIVKLKGPSLKSVDLVIQELINTVKKCTKKLANFPRLCEETERIVANHIREREGKTKDQVLLLIDIQVSYINTNHEDFIGFANAQQRSSQVHKKTTVGNQGTNLPPSRQIVIRKGWLTISNIGIMKGGSKGYWFVLTAESLSWYKDDEEKEKKYMLPLDNLKVRDVEKSFMSSKHIFALFNTEQRNVYKDYRFLELACDSQEDVDSWKASLLRAGVYPDKSVAENDENGQAENFSMDPQLERQVETIRNLVDSYMSIINKCIRDLIPKTIMHLMINNVKDFINSELLAQLYSSEDQNTLMEESAEQAQRRDEMLRMYQALKEALGIIGDISTATVSTPAPPPVDDSWIQHSRRSPPPSPTTQRRPTLSAPLARPTSGRGPAPAIPSPGPHSGAPPVPFRPGPLPPFPSSSDSFGAPPQVPSRPTRAPPSVPSRRPPPSPTRPTIIRPLESSLLD.

The region spanning 28 to 294 (LLELPQIAVV…LTNHIRDTLP (267 aa)) is the Dynamin-type G domain. Positions 38–45 (GGQSAGKS) are G1 motif. 38–46 (GGQSAGKSS) contacts GTP. Residues 64–66 (VTR) are G2 motif. The interval 136 to 139 (DLPG) is G3 motif. A G4 motif region spans residues 205-208 (TKLD). 205-211 (TKLDLMD) contacts GTP. The residue at position 231 (Y231) is a Phosphotyrosine. Positions 235-238 (VNRS) are G5 motif. A GTP-binding site is contributed by 236–239 (NRSQ). Residue K299 is modified to N6-acetyllysine. One can recognise a PH domain in the interval 515–621 (QGTNLPPSRQ…ACDSQEDVDS (107 aa)). Phosphotyrosine is present on Y603. An N6-acetyllysine modification is found at K604. Residues 659–750 (VETIRNLVDS…IIGDISTATV (92 aa)) enclose the GED domain. Positions 747–869 (TATVSTPAPP…IRPLESSLLD (123 aa)) are disordered. Residues S769 and S773 each carry the phosphoserine modification. 2 stretches are compositionally biased toward pro residues: residues 797 to 822 (PAIP…PPFP) and 832 to 855 (PQVP…PSPT). Residue S853 is modified to Phosphoserine.

Belongs to the TRAFAC class dynamin-like GTPase superfamily. Dynamin/Fzo/YdjA family.

Its subcellular location is the cytoplasm. It is found in the cytoskeleton. It catalyses the reaction GTP + H2O = GDP + phosphate + H(+). Microtubule-associated force-producing protein involved in producing microtubule bundles and able to bind and hydrolyze GTP. Most probably involved in vesicular trafficking processes, in particular endocytosis. This is Dynamin-3 (DNM3) from Homo sapiens (Human).